We begin with the raw amino-acid sequence, 97 residues long: Large ribosomal subunit protein uL23 (97 aa).

Belongs to the universal ribosomal protein uL23 family. Part of the 50S ribosomal subunit. Contacts protein L29, and trigger factor when it is bound to the ribosome.

One of the early assembly proteins it binds 23S rRNA. One of the proteins that surrounds the polypeptide exit tunnel on the outside of the ribosome. Forms the main docking site for trigger factor binding to the ribosome. The protein is Large ribosomal subunit protein uL23 of Pelagibacter ubique (strain HTCC1062).